The sequence spans 1325 residues: Nucleoporin nup146 (1325 aa).

Disordered regions lie at residues M1–S20, V453–N474, G758–H951, and F973–L994. The span at Q763 to L778 shows a compositional bias: polar residues. Residues S779 to E791 show a composition bias toward basic and acidic residues. Over residues T792–K801 the composition is skewed to polar residues. Positions Q802 to G811 are enriched in basic and acidic residues. Polar residues-rich tracts occupy residues A816 to S835 and F850 to F861. A compositionally biased stretch (basic and acidic residues) spans L867–D881. Phosphothreonine is present on T899. A compositionally biased stretch (acidic residues) spans S927–S937. The residue at position 946 (T946) is a Phosphothreonine. Phosphoserine occurs at positions 1041, 1043, and 1044.

The protein resides in the cytoplasm. Its subcellular location is the nucleus. Functions as a component of the nuclear pore complex (NPC). NPC components, collectively referred to as nucleoporins (NUPs), can play the role of both NPC structural components and of docking or interaction partners for transiently associated nuclear transport factors. Active directional transport is assured by both, a Phe-Gly (FG) repeat affinity gradient for these transport factors across the NPC and a transport cofactor concentration gradient across the nuclear envelope. The chain is Nucleoporin nup146 (nup146) from Schizosaccharomyces pombe (strain 972 / ATCC 24843) (Fission yeast).